A 205-amino-acid polypeptide reads, in one-letter code: Protein N-terminal glutamine amidohydrolase (205 aa).

Residues Cys-20, His-74, and Asp-90 contribute to the active site.

Belongs to the NTAQ1 family. In terms of assembly, monomer.

The catalysed reaction is N-terminal L-glutaminyl-[protein] + H2O = N-terminal L-glutamyl-[protein] + NH4(+). Functionally, mediates the side-chain deamidation of N-terminal glutamine residues to glutamate, an important step in N-end rule pathway of protein degradation. Conversion of the resulting N-terminal glutamine to glutamate renders the protein susceptible to arginylation, polyubiquitination and degradation as specified by the N-end rule. Does not act on substrates with internal or C-terminal glutamine and does not act on non-glutamine residues in any position. This Drosophila grimshawi (Hawaiian fruit fly) protein is Protein N-terminal glutamine amidohydrolase (tun).